The following is a 461-amino-acid chain: MSHHSETILTAILNTKYLENGSKHKIIELPKTNIKKLIKDFLSVNSNKKIQSDCVLINYFPNALLLDNPNKNSSVKKEQTNQVKIIEKPITNNINKPEDIWDIIDNMDKENNSESLENIQSENSENNDNFTDNNTKKSPTKSRICSGCGSKGTLLEDQSSSVLVCSECGMINDDLLDHGPEWRQYYNDDGRGEGVNRCGCPSNFFFPKSSQGTILAGTGSGRLKRKQKWNSTVYKERSLNDVFEKISTICSKSNIPRIIADTAKILYKKLSDCKHKSGNNVGKQIIIRGHNRISIIAACIYKACEMNKNPRTVKEIARFFGIDEKKVTKGNKQFEKIMKNTDDNMIILDPVNSNSTEDYIRRHCPRLKVNKDHTDIAVKISNNCCRMKLASDHNPQSIAAGAILVMVVFCELNIDKRKISRLFGISDVTIDKIYKKIAPYAPALVDDGATDHLINKLKING.

A disordered region spans residues 113–142 (SESLENIQSENSENNDNFTDNNTKKSPTKS). Positions 121 to 137 (SENSENNDNFTDNNTKK) are enriched in low complexity. Residues 141–173 (KSRICSGCGSKGTLLEDQSSSVLVCSECGMIND) form a TFIIB-type zinc finger. The Zn(2+) site is built by Cys145, Cys165, and Cys168. 2 repeat units span residues 246 to 327 (ISTI…EKKV) and 360 to 430 (IRRH…DVTI).

Belongs to the TFIIB family.

In Acanthamoeba polyphaga mimivirus (APMV), this protein is Putative transcription initiation factor IIB-like protein.